The sequence spans 495 residues: Putative aldehyde dehydrogenase AldA (495 aa).

212–218 (GKGSESG) lines the NAD(+) pocket. Residues Glu-256 and Cys-290 contribute to the active site.

It belongs to the aldehyde dehydrogenase family.

It carries out the reaction an aldehyde + NAD(+) + H2O = a carboxylate + NADH + 2 H(+). The sequence is that of Putative aldehyde dehydrogenase AldA (aldA) from Staphylococcus aureus (strain MSSA476).